The following is a 429-amino-acid chain: UPF0242 protein CT_616 (429 aa).

It belongs to the UPF0242 family.

The sequence is that of UPF0242 protein CT_616 from Chlamydia trachomatis serovar D (strain ATCC VR-885 / DSM 19411 / UW-3/Cx).